The chain runs to 82 residues: Small ribosomal subunit protein bS18 (82 aa).

A disordered region spans residues 1 to 20; it reads MVDINQIPTRRPFHRRRKTC.

The protein belongs to the bacterial ribosomal protein bS18 family. In terms of assembly, part of the 30S ribosomal subunit. Forms a tight heterodimer with protein bS6.

Binds as a heterodimer with protein bS6 to the central domain of the 16S rRNA, where it helps stabilize the platform of the 30S subunit. This is Small ribosomal subunit protein bS18 from Chelativorans sp. (strain BNC1).